The primary structure comprises 84 residues: Large ribosomal subunit protein bL31B (84 aa).

The protein belongs to the bacterial ribosomal protein bL31 family. Type B subfamily. Part of the 50S ribosomal subunit.

The chain is Large ribosomal subunit protein bL31B from Rhodococcus erythropolis (strain PR4 / NBRC 100887).